The chain runs to 311 residues: Porphobilinogen deaminase (311 aa).

At cysteine 241 the chain carries S-(dipyrrolylmethanemethyl)cysteine.

This sequence belongs to the HMBS family. Monomer. Requires dipyrromethane as cofactor.

It carries out the reaction 4 porphobilinogen + H2O = hydroxymethylbilane + 4 NH4(+). Its pathway is porphyrin-containing compound metabolism; protoporphyrin-IX biosynthesis; coproporphyrinogen-III from 5-aminolevulinate: step 2/4. Tetrapolymerization of the monopyrrole PBG into the hydroxymethylbilane pre-uroporphyrinogen in several discrete steps. The sequence is that of Porphobilinogen deaminase from Bacillus pumilus (strain SAFR-032).